Reading from the N-terminus, the 1163-residue chain is MPGPCASAAAFSCILVLLLLGCQRSNPLAAGATVSSMRRLTDTINIGFLAEYSQMRVTLGGLPLAIEDVNKNPNLLPGKKLAFKPVDIGHKMSAYRVKPLRAMTQMREAGVTAFIGPDESCTTEALLASAWNTPMLSFKCSDPIVSNKSTFHTFARTLAPASKVSKSVISLLNAFHWNKFSIVVSSKPIWGSDVARAIQELAEARNFTISHFKYISDYIPTTKTLSQIDKIIEETYATTRIYVFIGEHIAMVDFVRGLQNRRLLESGDYIVVSVDDEIYDSNRRVNIMERNYLDPYIRKEKSKSLDKISFRSVIKISMTYPQNPHIRVPIYGLHLYDSVMIYVRAITEVLRLGGDIYDGNLVMSHIFNRSYHSIQGFDVYIDSNGDAEGNYTVITLQNDVGSGASIGSLAKMSMQPVGFFAYDKNSVIPEFRYIKNDRPIQWLNGRPPLAEPLCGFHGELCPRKKLDWRYLVSGPLCALVVVVAIALLIKHYRYEQTLAGLLWKVDMKDVTVINLGEYNNPTNKNIFQICRQSILVVGEPNKRSFTNIALFRGNIVAMKKIHKKSVDITRSIRKELKLMREVRHENIINFIGASTDHGSVIIFTTYCARGSLEDVLANEDLHLDHMFISSLVSDILKGMIYLHDSEIISHGNLRSSNCLIDSRWVCQISDFGLHELKAGQEEPNKSELELKRALCMAPELLRDAYRPGRGSQKGDVYSFGILLYEMIGRKGPWGDTAYSKEEIIQFVKCPEMLQHGVFRPALTHTHLDIPDYIRKCLCQCWDEDPEVRPDIRLVRMHLKELQAGLKPNIFDNMLSIMEKYAYNLEGLVQERTNLLYEEKKKTDMLLYQMLPRPVAELLKRGDPVEAECFDCVTILFSDIVGFTELCTTSTPFEVVEMLNDWYTCCDSIISNYDVYKVETIGDAYMVVSGLPLQNGSRHAGEIASLALHLLETVGNLKIRHKPTETVQLRIGVHSGPCAAGVVGQKMPRYCLFGDTVNTASRMESTGDSMRIHISEATYQLLQVIGSYVCIERGLTSIKGKGDMRTYWLTKRQQPELTPDLISTVDTLDTYCSGPRESMEVSVHQYCSPASNNYRLGSCNCDTKCLYSRRSDDNVTNSHGTSEFPKVSEPAQVNCNQLCVCRLNSSQMFNNRGPRSAPSITFRL.

An N-terminal signal peptide occupies residues 1 to 25; that stretch reads MPGPCASAAAFSCILVLLLLGCQRS. At 29–469 the chain is on the extracellular side; that stretch reads AAGATVSSMR…LCPRKKLDWR (441 aa). Residues Asn147, Asn206, Asn368, and Asn390 are each glycosylated (N-linked (GlcNAc...) asparagine). Residues 470-490 traverse the membrane as a helical segment; sequence YLVSGPLCALVVVVAIALLIK. Residues 491–1163 lie on the Cytoplasmic side of the membrane; sequence HYRYEQTLAG…RSAPSITFRL (673 aa). One can recognise a Protein kinase domain in the interval 507 to 800; the sequence is MKDVTVINLG…IRLVRMHLKE (294 aa). The Guanylate cyclase domain maps to 873 to 1003; that stretch reads TILFSDIVGF…DTVNTASRME (131 aa).

This sequence belongs to the adenylyl cyclase class-4/guanylyl cyclase family.

The protein localises to the membrane. It catalyses the reaction GTP = 3',5'-cyclic GMP + diphosphate. In Drosophila melanogaster (Fruit fly), this protein is Guanylate cyclase 32E (Gyc32E).